We begin with the raw amino-acid sequence, 1477 residues long: FHA domain-containing protein PS1 (1477 aa).

Residues 64 to 115 form the FHA domain; it reads LVVGRHPDCDILLTHPSISRFHLEIRSISSRQKLFVTDLSSVHGTWVRDLRI. Disordered regions lie at residues 188-218, 588-644, 789-818, 832-911, 942-979, 1004-1030, and 1159-1225; these read ENTTSGDEGVLHLDVTSEGTGSSVPSEDEDT, LGKA…PKSF, PNSFSKAEPTLETEDSRQQARGLVGSDSEF, LNQK…LIGS, ALAAKTSEDTKLIEELSSSDSGSQENQTPETHAVRDDV, IRTNKSQGKQKQTGRQPKDKLHRKQAL, and VEQE…IRSS. Residues 589 to 607 are compositionally biased toward basic and acidic residues; that stretch reads GKADIRSHEENGESEDSRQ. Residues 832–849 show a composition bias toward polar residues; it reads LNQKRNGETKVSSRQASP. Residues 870–883 show a composition bias toward low complexity; the sequence is QSLCSSSQPPSESE. Composition is skewed to polar residues over residues 885 to 897, 957 to 971, 1007 to 1018, and 1198 to 1212; these read NPATDQDQESGII, LSSSDSGSQENQTPE, NKSQGKQKQTGR, and SSFQSQSYTEASSTA. Residues 1213-1225 show a composition bias toward low complexity; the sequence is SARNNISRGIRSS.

In terms of biological role, required for normal spindle orientation at male meiosis II and normal formation of tetrad of microspores. Not involved in female meiosis. This Arabidopsis thaliana (Mouse-ear cress) protein is FHA domain-containing protein PS1.